A 592-amino-acid polypeptide reads, in one-letter code: Aspartate--tRNA ligase (592 aa).

An L-aspartate-binding site is contributed by Glu-171. The interval 195-198 is aspartate; it reads QLFK. Residue Arg-217 participates in L-aspartate binding. ATP contacts are provided by residues 217–219 and Gln-226; that span reads RDE. Residue His-448 coordinates L-aspartate. Glu-482 lines the ATP pocket. Arg-489 contacts L-aspartate. 534–537 contacts ATP; the sequence is GLDR.

Belongs to the class-II aminoacyl-tRNA synthetase family. Type 1 subfamily. Homodimer.

Its subcellular location is the cytoplasm. The enzyme catalyses tRNA(Asp) + L-aspartate + ATP = L-aspartyl-tRNA(Asp) + AMP + diphosphate. Functionally, catalyzes the attachment of L-aspartate to tRNA(Asp) in a two-step reaction: L-aspartate is first activated by ATP to form Asp-AMP and then transferred to the acceptor end of tRNA(Asp). The sequence is that of Aspartate--tRNA ligase from Vibrio vulnificus (strain CMCP6).